Here is a 540-residue protein sequence, read N- to C-terminus: Zinc finger protein 768 (540 aa).

Disordered regions lie at residues 1–166 and 239–258; these read MERE…FEAQ and TGAL…GQGP. Phosphoserine occurs at positions 17, 18, and 23. Phosphotyrosine is present on Y27. Position 33 is a phosphoserine (S33). Residues 34–53 are compositionally biased toward acidic residues; it reads ENEEEEISQQEGSGDYEVEE. S62, S69, S76, S83, S90, S97, S104, S107, S111, S118, and S125 each carry phosphoserine. Residues 62 to 77 are compositionally biased toward low complexity; that stretch reads SPGFEPQSPEFEPQSP. Positions 107 to 119 are enriched in polar residues; that stretch reads SDSQSPEFESQSP. At Y128 the chain carries Phosphotyrosine. S132 carries the post-translational modification Phosphoserine. Y135 bears the Phosphotyrosine mark. Position 139 is a phosphoserine (S139). Y142 carries the post-translational modification Phosphotyrosine. Phosphoserine occurs at positions 144 and 147. A compositionally biased stretch (polar residues) spans 149–166; that stretch reads YESQNTELKTQSPEFEAQ. T158 bears the Phosphothreonine mark. S160 carries the phosphoserine modification. The C2H2-type 1 zinc finger occupies 261–283; it reads NICGICGKSFGRGSTLIQHQRIH. Position 284 is a phosphothreonine (T284). Y289 bears the Phosphotyrosine mark. C2H2-type zinc fingers lie at residues 289 to 311, 317 to 339, 345 to 367, and 373 to 395; these read YKCE…QRTH, YKCP…QRTH, and YSCT…QRVH. Phosphoserine is present on residues S295 and S299. T396 is modified (phosphothreonine). 5 consecutive C2H2-type zinc fingers follow at residues 401–423, 429–451, 457–479, 485–507, and 513–535; these read FSCG…ARSH, FKCP…ARTH, YSCP…QRSH, YRCA…HRVH, and YKCD…QRTH. Position 442 is a phosphoserine (S442).

Belongs to the krueppel C2H2-type zinc-finger protein family. Interacts (via zinc-finger domains) with TP53 (via N-terminus); interaction might be facilitated by TP53 oligomerization state. Interacts with ELP3. In terms of processing, may be phosphorylated at residue 'Ser-5' of the tandem heptapeptide repeats in the N-terminus. Phosphorylation might be increased upon RAS pathway activation and negatively regulate protein stability.

The protein localises to the nucleus. It is found in the chromosome. Binds to mammalian-wide interspersed repeat (MIRs) sequences in euchromatin and promoter regions of genes at the consensus sequence 5'-GCTGTGTG-[N20]-CCTCTCTG-3', consisting of two anchor regions connected by a linker region; the linker region probably does not contribute to the binding specificity. Required for cell homeostasis. May be involved in transcriptional regulation. The protein is Zinc finger protein 768 (ZNF768) of Homo sapiens (Human).